The following is a 201-amino-acid chain: Pyridoxal 5'-phosphate synthase subunit PdxT (201 aa).

Gly-50–Ser-52 contacts L-glutamine. Cys-82 functions as the Nucleophile in the catalytic mechanism. Residues Arg-111 and Ile-139–Arg-140 each bind L-glutamine. Active-site charge relay system residues include His-180 and Glu-182.

Belongs to the glutaminase PdxT/SNO family. As to quaternary structure, in the presence of PdxS, forms a dodecamer of heterodimers. Only shows activity in the heterodimer.

The enzyme catalyses aldehydo-D-ribose 5-phosphate + D-glyceraldehyde 3-phosphate + L-glutamine = pyridoxal 5'-phosphate + L-glutamate + phosphate + 3 H2O + H(+). It carries out the reaction L-glutamine + H2O = L-glutamate + NH4(+). It functions in the pathway cofactor biosynthesis; pyridoxal 5'-phosphate biosynthesis. Catalyzes the hydrolysis of glutamine to glutamate and ammonia as part of the biosynthesis of pyridoxal 5'-phosphate. The resulting ammonia molecule is channeled to the active site of PdxS. The sequence is that of Pyridoxal 5'-phosphate synthase subunit PdxT from Nocardioides sp. (strain ATCC BAA-499 / JS614).